A 308-amino-acid chain; its full sequence is Porphobilinogen deaminase (308 aa).

Cys240 carries the post-translational modification S-(dipyrrolylmethanemethyl)cysteine.

Belongs to the HMBS family. As to quaternary structure, monomer. Requires dipyrromethane as cofactor.

The enzyme catalyses 4 porphobilinogen + H2O = hydroxymethylbilane + 4 NH4(+). It participates in porphyrin-containing compound metabolism; protoporphyrin-IX biosynthesis; coproporphyrinogen-III from 5-aminolevulinate: step 2/4. Tetrapolymerization of the monopyrrole PBG into the hydroxymethylbilane pre-uroporphyrinogen in several discrete steps. The chain is Porphobilinogen deaminase from Campylobacter lari (strain RM2100 / D67 / ATCC BAA-1060).